The sequence spans 251 residues: Esterase mlcF (251 aa).

Active-site charge relay system residues include Ser126, Asp193, and His221.

The protein belongs to the LovG family.

It catalyses the reaction dihydro-ML-236C-[compactin nonaketide synthase] + H2O = holo-[compactin nonaketide synthase] + dihydro-ML-236C carboxylate + H(+). The protein operates within polyketide biosynthesis. Its function is as follows. Esterase; part of the gene cluster that mediates the biosynthesis of compactin, also known as mevastatin or ML-236B, and which acts as a potent competitive inhibitor of HMG-CoA reductase. Compactin biosynthesis is performed in two stages. The first stage is catalyzed by the nonaketide synthase mlcA, which belongs to type I polyketide synthases and catalyzes the iterative nine-step formation of the polyketide. This PKS stage is completed by the action of dehydrogenase mlcG, which catalyzes the NADPH-dependent reduction of the unsaturated tetra-, penta- and heptaketide intermediates that arise during the mlcA-mediated biosynthesis of the nonaketide chain and leads to dihydro-ML-236C carboxylate. Covalently bound dihydro-ML-236C carboxylate is released from mlcA by the mlcF esterase. Conversion of dihydro-ML-236C carboxylate into ML-236A carboxylate is subsequently performed with the participation of molecular oxygen and P450 monoogygenase mlcC. Finally, mlcH performs the conversion of ML-236A carboxylate to ML-236B/compactin carboxylate through the addition of the side-chain diketide moiety produced by the diketide synthase mlcB. This chain is Esterase mlcF, found in Penicillium citrinum.